Reading from the N-terminus, the 262-residue chain is MEKVKIGIIGGSGLYSPDFLTNPKEEKIYTPYGPPSSHVVIGEIAGRKVAFIPRHGKRHEIPPHKVNYRANIYALKELGVERLISVSAVGSLREDYKPGDFVCTDQFIDMTKGRVYTFYDGPVVAHVSMADPFCPELRELCIRSARKLGITMHEKGTYICIEGPRFSTRAESRLWRQFGADIIGMTLVPEVNLAREARMCFLNIAMVTDYDVWAEKPVTAHEVARVMAENTEKVKRLLADLIPSIPEERKCQCARALDEALI.

Residues S12, 54 to 55 (RH), and 87 to 88 (SA) each bind phosphate. M185 is a binding site for substrate. Residue T186 coordinates phosphate. 209–211 (DYD) is a binding site for substrate.

This sequence belongs to the PNP/MTAP phosphorylase family. MTAP subfamily. In terms of assembly, homohexamer. Dimer of a homotrimer.

It catalyses the reaction S-methyl-5'-thioadenosine + phosphate = 5-(methylsulfanyl)-alpha-D-ribose 1-phosphate + adenine. It functions in the pathway amino-acid biosynthesis; L-methionine biosynthesis via salvage pathway; S-methyl-5-thio-alpha-D-ribose 1-phosphate from S-methyl-5'-thioadenosine (phosphorylase route): step 1/1. Catalyzes the reversible phosphorylation of S-methyl-5'-thioadenosine (MTA) to adenine and 5-methylthioribose-1-phosphate. Involved in the breakdown of MTA, a major by-product of polyamine biosynthesis. Responsible for the first step in the methionine salvage pathway after MTA has been generated from S-adenosylmethionine. Has broad substrate specificity with 6-aminopurine nucleosides as preferred substrates. The protein is S-methyl-5'-thioadenosine phosphorylase of Thermofilum pendens (strain DSM 2475 / Hrk 5).